A 95-amino-acid polypeptide reads, in one-letter code: Small ribosomal subunit protein uS19 (95 aa).

The protein belongs to the universal ribosomal protein uS19 family.

Protein S19 forms a complex with S13 that binds strongly to the 16S ribosomal RNA. The sequence is that of Small ribosomal subunit protein uS19 from Coxiella burnetii (strain CbuK_Q154) (Coxiella burnetii (strain Q154)).